Here is an 81-residue protein sequence, read N- to C-terminus: Cytochrome b559 subunit alpha (81 aa).

Residues 21–35 (VIHSITIPMLFIAGW) traverse the membrane as a helical segment. Histidine 23 lines the heme pocket.

Belongs to the PsbE/PsbF family. As to quaternary structure, heterodimer of an alpha subunit and a beta subunit. PSII is composed of 1 copy each of membrane proteins PsbA, PsbB, PsbC, PsbD, PsbE, PsbF, PsbH, PsbI, PsbJ, PsbK, PsbL, PsbM, PsbT, PsbX, PsbY, PsbZ, Psb30/Ycf12, peripheral proteins PsbO, CyanoQ (PsbQ), PsbU, PsbV and a large number of cofactors. It forms dimeric complexes. The cofactor is heme b.

It is found in the cellular thylakoid membrane. In terms of biological role, this b-type cytochrome is tightly associated with the reaction center of photosystem II (PSII). PSII is a light-driven water:plastoquinone oxidoreductase that uses light energy to abstract electrons from H(2)O, generating O(2) and a proton gradient subsequently used for ATP formation. It consists of a core antenna complex that captures photons, and an electron transfer chain that converts photonic excitation into a charge separation. The chain is Cytochrome b559 subunit alpha from Crocosphaera subtropica (strain ATCC 51142 / BH68) (Cyanothece sp. (strain ATCC 51142)).